Consider the following 89-residue polypeptide: Small ribosomal subunit protein uS17 (89 aa).

This sequence belongs to the universal ribosomal protein uS17 family. Part of the 30S ribosomal subunit.

In terms of biological role, one of the primary rRNA binding proteins, it binds specifically to the 5'-end of 16S ribosomal RNA. In Baumannia cicadellinicola subsp. Homalodisca coagulata, this protein is Small ribosomal subunit protein uS17.